The chain runs to 444 residues: Structure-specific endonuclease subunit SLX1 (444 aa).

Residues 23-105 (AFSCCYLLRS…QNTKVSRHAD (83 aa)) enclose the GIY-YIG domain. The SLX1-type zinc finger occupies 240–295 (CGVCKQRLILQHDIIAVCSHSSCHCAAHLSCLSSHFLKDKDSDSELVPREGTCPTC). A disordered region spans residues 324–354 (RRQRAGTPKGQGLKSVRGRGHSEDENESDAL).

It belongs to the SLX1 family. In terms of assembly, forms a heterodimer with SLX4. A divalent metal cation is required as a cofactor.

It localises to the nucleus. In terms of biological role, catalytic subunit of the SLX1-SLX4 structure-specific endonuclease that resolves DNA secondary structures generated during DNA repair and recombination. Has endonuclease activity towards branched DNA substrates, introducing single-strand cuts in duplex DNA close to junctions with ss-DNA. The polypeptide is Structure-specific endonuclease subunit SLX1 (Paracoccidioides lutzii (strain ATCC MYA-826 / Pb01) (Paracoccidioides brasiliensis)).